Consider the following 446-residue polypeptide: 5-methylthioadenosine/S-adenosylhomocysteine deaminase (446 aa).

Zn(2+) is bound by residues His72 and His74. The substrate site is built by Glu101 and His194. His221 is a binding site for Zn(2+). Substrate contacts are provided by Glu224 and Asp309. Position 309 (Asp309) interacts with Zn(2+).

This sequence belongs to the metallo-dependent hydrolases superfamily. MTA/SAH deaminase family. It depends on Zn(2+) as a cofactor.

The enzyme catalyses S-adenosyl-L-homocysteine + H2O + H(+) = S-inosyl-L-homocysteine + NH4(+). It catalyses the reaction S-methyl-5'-thioadenosine + H2O + H(+) = S-methyl-5'-thioinosine + NH4(+). Its function is as follows. Catalyzes the deamination of 5-methylthioadenosine and S-adenosyl-L-homocysteine into 5-methylthioinosine and S-inosyl-L-homocysteine, respectively. Is also able to deaminate adenosine. The chain is 5-methylthioadenosine/S-adenosylhomocysteine deaminase from Saccharophagus degradans (strain 2-40 / ATCC 43961 / DSM 17024).